Consider the following 297-residue polypeptide: MNLRQVEAFRAVMLTGQMTAAAELMLVTQPAISRLIKDFERATKLQLFERRGNHIIPTQEAKTLWEEVDRAFVGLNHIGNLAADIGRQAAGTLRIAAMPALANGFLPRFLAQFLHKPKLQVSLMGLPSSMVMEAVASGRADIGYADGPSERQGFLIETRSLPAMVAVPMGHRLAGLDRITPQEPGGERIIKQETGTLFAMRVEVAIGSILRRPSLEVSLSHTALSLVREAAGIAIIDPTAAIEFKDSIALRPFSIFIDAGFLEVRSANGAPSTVVDRFATEFSSFHDALMAQSGLIS.

The HTH lysR-type domain occupies 1 to 58 (MNLRQVEAFRAVMLTGQMTAAAELMLVTQPAISRLIKDFERATKLQLFERRGNHIIPT). A DNA-binding region (H-T-H motif) is located at residues 18 to 37 (MTAAAELMLVTQPAISRLIK).

Belongs to the LysR transcriptional regulatory family.

In terms of biological role, positive regulatory protein for the occ operon involved in octopine catabolism and uptake. Also acts as a negative regulator of its expression. In Rhizobium meliloti (Ensifer meliloti), this protein is Octopine catabolism/uptake operon regulatory protein OccR (occR).